Here is a 165-residue protein sequence, read N- to C-terminus: Transcription elongation factor A protein-like 1 (165 aa).

Disordered stretches follow at residues 1-66 and 89-124; these read MENS…LLPE and IPMEQPPCGIGKHKLEEGSFKERLARSRPQFRGDIH. Positions 33-60 are enriched in acidic residues; the sequence is CSEDDQSSEDLSSEEQSSDEEFFPEELL. Positions 101–124 are enriched in basic and acidic residues; sequence HKLEEGSFKERLARSRPQFRGDIH.

Belongs to the TFS-II family. TFA subfamily.

The protein resides in the nucleus. Functionally, may be involved in transcriptional regulation. Modulates various viral and cellular promoters in a promoter context-dependent manner. Does not bind DNA directly. This chain is Transcription elongation factor A protein-like 1, found in Rattus norvegicus (Rat).